Consider the following 457-residue polypeptide: DDB1- and CUL4-associated factor 10 (457 aa).

4 WD repeats span residues 65–104 (RTHG…HIKT), 108–146 (AHED…SKAC), 150–189 (GHTS…EDGC), and 195–234 (FHTR…KSLE). Residues 246–265 (TASTSDMTSTSSETRPSSSP) are compositionally biased toward low complexity. The tract at residues 246–304 (TASTSDMTSTSSETRPSSSPCHNSDSGPLFEKHMSRSSQREGTSPRNSLEVLTPEVPGE) is disordered. The span at 281 to 292 (RSSQREGTSPRN) shows a compositional bias: polar residues. 3 WD repeats span residues 306 to 346 (DRGN…QEGT), 368 to 406 (VGRG…KELV), and 424 to 457 (SHKD…QPKF).

This sequence belongs to the WD repeat DCAF10 family.

It functions in the pathway protein modification; protein ubiquitination. May function as a substrate receptor for CUL4-DDB1 E3 ubiquitin-protein ligase complex. This is DDB1- and CUL4-associated factor 10 (dcaf10) from Xenopus laevis (African clawed frog).